The chain runs to 58 residues: MAHKFEIYKDKAGEYRVRFKYNSEVMFSTEGYSTKAGAQNAIDSIKKNGPNAPVEDNS.

The protein belongs to the UPF0339 family.

The sequence is that of UPF0339 protein Msl4696 from Mesorhizobium japonicum (strain LMG 29417 / CECT 9101 / MAFF 303099) (Mesorhizobium loti (strain MAFF 303099)).